Reading from the N-terminus, the 340-residue chain is Immunoglobulin-binding protein 1 (340 aa).

Positions 47–61 constitute a UIM domain; it reads LELLEKAAGMLSQLD. Positions 99–203 are interaction with PPP2CA; sequence RLDHLQRARE…HLLHLRRWIA (105 aa). Disordered stretches follow at residues 223 to 242 and 291 to 340; these read DSPR…PPMK and SADF…QNMG. The segment at 226–291 is interaction with MID1; that stretch reads REETACHSSL…PDRGIAKPAS (66 aa). An N6-acetyllysine modification is found at lysine 242. Residues 292–301 show a composition bias toward low complexity; that stretch reads ADFQRAAQQQ. Over residues 302-312 the composition is skewed to acidic residues; the sequence is EDQEQKDEESE. Residues 313–330 show a composition bias toward basic and acidic residues; the sequence is EKALHRMREWDDWKDTHP.

The protein belongs to the IGBP1/TAP42 family. Interacts with PPP2CB, and with PP4 and PP6. Interacts with MID2. Interacts with ubiquitin. Interacts with partially folded PPP2CA, but not with the fully active protein. Interacts with MID1. Post-translationally, phosphorylated. Monoubiquitination by MID1 triggers calpain-mediated cleavage and switches IGBP1 activity from protective to destructive. As to expression, expressed in spleen, thymus, liver and brain. Ubiquitously expressed in B lineage cell lines.

It localises to the cytoplasm. In terms of biological role, associated to surface IgM-receptor; may be involved in signal transduction. Involved in regulation of the catalytic activity of the phosphatases PP2A, PP4 and PP6 by protecting their partially folded catalytic subunits from degradative polyubiquitination until they associate with regulatory subunits. The polypeptide is Immunoglobulin-binding protein 1 (Igbp1) (Mus musculus (Mouse)).